A 523-amino-acid polypeptide reads, in one-letter code: Amino acid transporter protein 6 (523 aa).

The Cytoplasmic portion of the chain corresponds to 1–19; sequence MLNVFGVSASMPDDSRSQK. A helical transmembrane segment spans residues 20–40; that stretch reads MGLLGAISYIVGNIVGSGIFI. The Extracellular segment spans residues 41–51; it reads TPTSIIENVNS. Residues 52–72 traverse the membrane as a helical segment; the sequence is VGLSLAIWILAAFISMLGSFC. The Cytoplasmic segment spans residues 73–86; the sequence is YVELGTSIRLSGGD. The helical transmembrane segment at 87 to 107 threads the bilayer; that stretch reads FAYLCFMKWYPVAFAFMCIGC. Over 108–145 the chain is Extracellular; it reads TINYPATLAVQAQTFAEYVFRGAGVELDETSEFWAKKL. Residues 146–166 form a helical membrane-spanning segment; it reads LGFSLIILLMFMNFFSLKTFV. At 167–173 the chain is on the cytoplasmic side; sequence QRFSILA. Residues 174–194 form a helical membrane-spanning segment; sequence SLAKIAATLLIIITGFYYLIF. The Extracellular segment spans residues 195–214; the sequence is KHWKQNLEEPFKGSNWNPGP. A helical transmembrane segment spans residues 215-235; the sequence is FVNALFAGLFSYDGWDILNFG. Topologically, residues 236–249 are cytoplasmic; it reads AEEIENPKRTMPLS. The chain crosses the membrane as a helical span at residues 250–270; the sequence is IIIGMTCIGVIYVAVNVAYSI. Topologically, residues 271 to 290 are extracellular; that stretch reads VLSPTEMIASNAVAIDFANK. N-linked (GlcNAc...) asparagine glycosylation is present at Asn289. The chain crosses the membrane as a helical span at residues 291-311; it reads TLGAAAFVVPVMVAILLIGSL. Residues 312–348 are Cytoplasmic-facing; sequence NSTMFSASRYLQAVSRQGHIPSAISGIAPNCDSPRVA. Residues 349–369 form a helical membrane-spanning segment; sequence LLVHILIAIAVSFLGDPDKLI. At 370 to 404 the chain is on the extracellular side; sequence NYVAFAQWSQRAFTMSALLYLRIRGRPRHPDRIQL. The helical transmembrane segment at 405 to 425 threads the bilayer; the sequence is PIIMPILFFLVCTSMVVISII. Over 426 to 429 the chain is Cytoplasmic; that stretch reads DDFK. A helical transmembrane segment spans residues 430–450; it reads SSAVGLGILLGGLIIFIIFVW. Topologically, residues 451–523 are extracellular; the sequence is DRALPSSHTF…GNGQFKCTRM (73 aa). N-linked (GlcNAc...) asparagine glycosylation is present at Asn462. The PDZ-binding motif signature appears at 521–523; it reads TRM.

It belongs to the amino acid-polyamine-organocation (APC) superfamily. In terms of assembly, interacts (via PDZ-binding motif) with nfrl-1 (via PDZ 2 domain); the interaction with nrfl-1 is required to sequester aat-6 to the apical cell membrane of intestinal cells. As to expression, expressed at the apical cell membrane of intestinal cells.

The protein localises to the apical cell membrane. In terms of biological role, amino acid transporter that mediates the uptake of the L-enantiomers of various amino acids, including L-glutamate. May play a role in promoting fertility. This is Amino acid transporter protein 6 from Caenorhabditis elegans.